The primary structure comprises 362 residues: Leucoanthocyanidin dioxygenase (362 aa).

The Fe2OG dioxygenase domain occupies 211-313; that stretch reads MEELLLQKKI…RISWAVFCEP (103 aa). Fe cation-binding residues include His238, Asp240, and His294.

The protein belongs to the iron/ascorbate-dependent oxidoreductase family. It depends on Fe cation as a cofactor. L-ascorbate is required as a cofactor.

The enzyme catalyses a (2R,3S,4S)-leucoanthocyanidin + 2-oxoglutarate + O2 = a 4-H-anthocyanidin with a 3-hydroxy group + succinate + CO2 + 2 H2O. It participates in pigment biosynthesis; anthocyanin biosynthesis. Its function is as follows. Oxidation of leucoanthocyanidins into anthocyanidins. In Vitis vinifera (Grape), this protein is Leucoanthocyanidin dioxygenase.